We begin with the raw amino-acid sequence, 254 residues long: Alcohol dehydrogenase (254 aa).

10–33 (FVAGLGGIGLDTSREIVKSGPKNL) is an NAD(+) binding site. Ser-138 serves as a coordination point for substrate. The active-site Proton acceptor is Tyr-151.

The protein belongs to the short-chain dehydrogenases/reductases (SDR) family. In terms of assembly, homodimer.

It carries out the reaction a primary alcohol + NAD(+) = an aldehyde + NADH + H(+). It catalyses the reaction a secondary alcohol + NAD(+) = a ketone + NADH + H(+). The protein is Alcohol dehydrogenase (Adh) of Drosophila adiastola (Fruit fly).